We begin with the raw amino-acid sequence, 673 residues long: UvrABC system protein B (673 aa).

The Helicase ATP-binding domain occupies Glu-26 to Arg-183. ATP is bound at residue Gly-39–Thr-46. The Beta-hairpin motif lies at Tyr-92–Val-115. Residues Gln-431–Leu-597 form the Helicase C-terminal domain. Residues Ala-608–Met-627 are disordered. The 36-residue stretch at Gln-633 to Leu-668 folds into the UVR domain.

This sequence belongs to the UvrB family. As to quaternary structure, forms a heterotetramer with UvrA during the search for lesions. Interacts with UvrC in an incision complex.

It localises to the cytoplasm. In terms of biological role, the UvrABC repair system catalyzes the recognition and processing of DNA lesions. A damage recognition complex composed of 2 UvrA and 2 UvrB subunits scans DNA for abnormalities. Upon binding of the UvrA(2)B(2) complex to a putative damaged site, the DNA wraps around one UvrB monomer. DNA wrap is dependent on ATP binding by UvrB and probably causes local melting of the DNA helix, facilitating insertion of UvrB beta-hairpin between the DNA strands. Then UvrB probes one DNA strand for the presence of a lesion. If a lesion is found the UvrA subunits dissociate and the UvrB-DNA preincision complex is formed. This complex is subsequently bound by UvrC and the second UvrB is released. If no lesion is found, the DNA wraps around the other UvrB subunit that will check the other stand for damage. This Escherichia fergusonii (strain ATCC 35469 / DSM 13698 / CCUG 18766 / IAM 14443 / JCM 21226 / LMG 7866 / NBRC 102419 / NCTC 12128 / CDC 0568-73) protein is UvrABC system protein B.